A 124-amino-acid polypeptide reads, in one-letter code: Probable dihydroneopterin aldolase (124 aa).

Residues glutamate 23, tyrosine 56, and 75–76 each bind substrate; that span reads IE. The Proton donor/acceptor role is filled by lysine 103.

The protein belongs to the DHNA family.

The enzyme catalyses 7,8-dihydroneopterin = 6-hydroxymethyl-7,8-dihydropterin + glycolaldehyde. It functions in the pathway cofactor biosynthesis; tetrahydrofolate biosynthesis; 2-amino-4-hydroxy-6-hydroxymethyl-7,8-dihydropteridine diphosphate from 7,8-dihydroneopterin triphosphate: step 3/4. Its function is as follows. Catalyzes the conversion of 7,8-dihydroneopterin to 6-hydroxymethyl-7,8-dihydropterin. The protein is Probable dihydroneopterin aldolase (folB) of Chlamydia trachomatis serovar D (strain ATCC VR-885 / DSM 19411 / UW-3/Cx).